A 122-amino-acid chain; its full sequence is Double-headed protease inhibitor, submandibular gland (122 aa).

2 Kazal-like domains span residues 10–70 (GGRK…KCDI) and 71–121 (ECPQ…QCQS). Cystine bridges form between Cys16/Cys50, Cys28/Cys47, Cys36/Cys68, Cys72/Cys101, Cys79/Cys98, and Cys87/Cys119.

It is found in the secreted. Its function is as follows. This inhibitor is composed of two homologous actively inhibiting halves: one which inhibits trypsin, the other which inhibits elastase. The chain is Double-headed protease inhibitor, submandibular gland from Mustela lutreola (European mink).